We begin with the raw amino-acid sequence, 519 residues long: Methionine--tRNA ligase (519 aa).

The short motif at alanine 11–histidine 21 is the 'HIGH' region element. The 'KMSKS' region motif lies at lysine 299–serine 303. Lysine 302 provides a ligand contact to ATP. The interval leucine 500–lysine 519 is disordered.

It belongs to the class-I aminoacyl-tRNA synthetase family. MetG type 2B subfamily. As to quaternary structure, monomer.

The protein resides in the cytoplasm. It catalyses the reaction tRNA(Met) + L-methionine + ATP = L-methionyl-tRNA(Met) + AMP + diphosphate. Its function is as follows. Is required not only for elongation of protein synthesis but also for the initiation of all mRNA translation through initiator tRNA(fMet) aminoacylation. The protein is Methionine--tRNA ligase (metG) of Mycobacterium tuberculosis (strain CDC 1551 / Oshkosh).